Consider the following 309-residue polypeptide: Methionyl-tRNA formyltransferase (309 aa).

Residue 109 to 112 (SLLP) participates in (6S)-5,6,7,8-tetrahydrofolate binding.

Belongs to the Fmt family.

It carries out the reaction L-methionyl-tRNA(fMet) + (6R)-10-formyltetrahydrofolate = N-formyl-L-methionyl-tRNA(fMet) + (6S)-5,6,7,8-tetrahydrofolate + H(+). Its function is as follows. Attaches a formyl group to the free amino group of methionyl-tRNA(fMet). The formyl group appears to play a dual role in the initiator identity of N-formylmethionyl-tRNA by promoting its recognition by IF2 and preventing the misappropriation of this tRNA by the elongation apparatus. This Clostridium botulinum (strain Alaska E43 / Type E3) protein is Methionyl-tRNA formyltransferase.